We begin with the raw amino-acid sequence, 1047 residues long: Formin-like protein 3 (1047 aa).

G2 carries N-myristoyl glycine lipidation. A GBD/FH3 domain is found at 22-462 (VPMPDPTELE…AAFQRHNNIE (441 aa)). The disordered stretch occupies residues 520 to 561 (AVPVEAVAPPPPPPPPPPPPPPAPPLPSEVESIPIPPPPPPP). The span at 527–546 (APPPPPPPPPPPPPPAPPLP) shows a compositional bias: pro residues. In terms of domain architecture, FH2 spans 580–970 (IKKPIKTKFR…MREKLLAQEA (391 aa)). One can recognise a DAD domain in the interval 1000 to 1037 (DHRPVYEGKDGTIEDIITVLKSVPFTARTAKRGSRFFC).

It belongs to the formin homology family.

It localises to the cytoplasm. The protein localises to the cell membrane. In terms of biological role, required for developmental angiogenesis, but not for vasculogenesis. In Danio rerio (Zebrafish), this protein is Formin-like protein 3 (fmnl3).